The primary structure comprises 211 residues: MTTETFVKDIKPGLKNLNLIFIVLETGRVTKTKDGHEVRTCKVADKTGSINISVWDDVGNLIQPGDIIRLTKGYASVFKGCLTLYTGRGGDLQKIGEFCMVYSEVPNFSEPNPEYSAQQAPNKTVQNDSGPAAPQPPTGPPATSPASESQNGNGLSAPPGSGGGPHPPHTPSHPPSTRITRSQPNHTAAGPPGPSNNPVSNGKETRRSSKR.

The OB DNA-binding region spans 22 to 92; that stretch reads IVLETGRVTK…TLYTGRGGDL (71 aa). The interval 110 to 211 is disordered; sequence EPNPEYSAQQ…GKETRRSSKR (102 aa). Positions 115–128 are enriched in polar residues; it reads YSAQQAPNKTVQND. 2 stretches are compositionally biased toward pro residues: residues 133–143 and 165–174; these read APQPPTGPPAT and PHPPHTPSHP.

This sequence belongs to the SOSS-B family. SOSS-B1 subfamily. In terms of assembly, component of the SOSS complex, composed of SOSS-B (SOSS-B1/NABP2 or SOSS-B2/NABP1), SOSS-A/INTS3 and SOSS-C/INIP. SOSS complexes containing SOSS-B1/NABP2 are more abundant than complexes containing SOSS-B2/NABP1. Directly interacts with ATM, SOSS-A/INTS3 and RAD51. Interacts with INTS7. Post-translationally, phosphorylated by ATM in response to DNA damage. Phosphorylation prevents degradation by the proteasome, hence stabilization of the protein and accumulation within cells. In terms of processing, ubiquitinated in a FBXL5-dependent manner, leading to proteasomal degradation.

The protein localises to the nucleus. In terms of biological role, component of the SOSS complex, a multiprotein complex that functions downstream of the MRN complex to promote DNA repair and G2/M checkpoint. In the SOSS complex, acts as a sensor of single-stranded DNA that binds to single-stranded DNA, in particular to polypyrimidines. The SOSS complex associates with DNA lesions and influences diverse endpoints in the cellular DNA damage response including cell-cycle checkpoint activation, recombinational repair and maintenance of genomic stability. Required for efficient homologous recombination-dependent repair of double-strand breaks (DSBs) and ATM-dependent signaling pathways. The protein is SOSS complex subunit B1 (NABP2) of Bos taurus (Bovine).